Consider the following 547-residue polypeptide: Dihydroxy-acid dehydratase (547 aa).

A Mg(2+)-binding site is contributed by Asp78. Cys119 provides a ligand contact to [2Fe-2S] cluster. Positions 120 and 121 each coordinate Mg(2+). Position 121 is an N6-carboxylysine (Lys121). Cys191 is a [2Fe-2S] cluster binding site. Glu439 contacts Mg(2+). Catalysis depends on Ser464, which acts as the Proton acceptor.

Belongs to the IlvD/Edd family. As to quaternary structure, homodimer. It depends on [2Fe-2S] cluster as a cofactor. The cofactor is Mg(2+).

It catalyses the reaction (2R)-2,3-dihydroxy-3-methylbutanoate = 3-methyl-2-oxobutanoate + H2O. The catalysed reaction is (2R,3R)-2,3-dihydroxy-3-methylpentanoate = (S)-3-methyl-2-oxopentanoate + H2O. Its pathway is amino-acid biosynthesis; L-isoleucine biosynthesis; L-isoleucine from 2-oxobutanoate: step 3/4. It participates in amino-acid biosynthesis; L-valine biosynthesis; L-valine from pyruvate: step 3/4. Functions in the biosynthesis of branched-chain amino acids. Catalyzes the dehydration of (2R,3R)-2,3-dihydroxy-3-methylpentanoate (2,3-dihydroxy-3-methylvalerate) into 2-oxo-3-methylpentanoate (2-oxo-3-methylvalerate) and of (2R)-2,3-dihydroxy-3-methylbutanoate (2,3-dihydroxyisovalerate) into 2-oxo-3-methylbutanoate (2-oxoisovalerate), the penultimate precursor to L-isoleucine and L-valine, respectively. This chain is Dihydroxy-acid dehydratase, found in Methanospirillum hungatei JF-1 (strain ATCC 27890 / DSM 864 / NBRC 100397 / JF-1).